Reading from the N-terminus, the 412-residue chain is MNDLIINHIAELILPRSTDKPLKGKELDELNVVKNGTVVIKDGKIVYAGQHTDDYDATETIDASGKVVSPALVDAHTHLTFGGSREHEMSLKRQGKSYLEILEMGGGILSTVNATRETSEDDLFKKAEHDLLTMIKHGVLAVESKSGYGLDRENELKQLKVSNRLAEKHDLDMKHTFLGPHAVPKEASSNEAFLEEMIALLPEVKQYADFADIFCETGVFTIEQSQHYMQKAKEAGFKVKIHADEIDPLGGLELAIDEQAISADHLVASSDKGKEKLRNSDTVAVLLPATTFYLGKEDYADARGMLDNNGAIALATDYNPGSSVTNNLQLVMAIAALKLKLSPNEVWNAVTVNAAKAIDINAGTINTGDKANLVIWDAPNHEYIPYHFGINHAEKVIKDGKVIVDNTLSFKA.

Fe(3+) contacts are provided by histidine 76 and histidine 78. Zn(2+)-binding residues include histidine 76 and histidine 78. Arginine 85, tyrosine 148, and histidine 181 together coordinate 4-imidazolone-5-propanoate. N-formimidoyl-L-glutamate is bound at residue tyrosine 148. Histidine 242 lines the Fe(3+) pocket. Histidine 242 is a binding site for Zn(2+). Glutamate 245 is a binding site for 4-imidazolone-5-propanoate. Residue aspartate 317 participates in Fe(3+) binding. Aspartate 317 is a binding site for Zn(2+). Positions 319 and 321 each coordinate N-formimidoyl-L-glutamate. Serine 322 serves as a coordination point for 4-imidazolone-5-propanoate.

Belongs to the metallo-dependent hydrolases superfamily. HutI family. Zn(2+) serves as cofactor. Requires Fe(3+) as cofactor.

Its subcellular location is the cytoplasm. It carries out the reaction 4-imidazolone-5-propanoate + H2O = N-formimidoyl-L-glutamate. The protein operates within amino-acid degradation; L-histidine degradation into L-glutamate; N-formimidoyl-L-glutamate from L-histidine: step 3/3. In terms of biological role, catalyzes the hydrolytic cleavage of the carbon-nitrogen bond in imidazolone-5-propanoate to yield N-formimidoyl-L-glutamate. It is the third step in the universal histidine degradation pathway. In Staphylococcus aureus (strain bovine RF122 / ET3-1), this protein is Imidazolonepropionase.